A 137-amino-acid chain; its full sequence is Active regulator of SIRT1 (137 aa).

Arginine 7 bears the Citrulline mark. A compositionally biased stretch (low complexity) spans 14-24; sequence GAPEAPGAAPG. Positions 14 to 58 are disordered; that stretch reads GAPEAPGAAPGHTKPSQAPMKRTRKAKATQAQKLRNSAKGKVPKS. Phosphoserine is present on serine 84. Residues 96 to 120 form a disordered region; it reads RQNRGRKACDRPVTKTKKKKKAEGT.

Belongs to the AROS family. As to quaternary structure, part of the small subunit (SSU) processome, composed of more than 70 proteins and the RNA chaperone small nucleolar RNA (snoRNA) U3. Interacts with RPS19; the interaction is direct and mediates the integration of RPS19 in state post-A1. Interacts with SIRT1. In terms of processing, citrullinated by PADI4.

Its subcellular location is the nucleus. It is found in the nucleolus. In terms of biological role, part of the small subunit (SSU) processome, first precursor of the small eukaryotic ribosomal subunit. During the assembly of the SSU processome in the nucleolus, many ribosome biogenesis factors, an RNA chaperone and ribosomal proteins associate with the nascent pre-rRNA and work in concert to generate RNA folding, modifications, rearrangements and cleavage as well as targeted degradation of pre-ribosomal RNA by the RNA exosome. Acts as a chaperone that specifically mediates the integration of RPS19 in state post-A1. Direct regulator of SIRT1. Enhances SIRT1-mediated deacetylation of p53/TP53, thereby participating in inhibition of p53/TP53-mediated transcriptional activity. The polypeptide is Active regulator of SIRT1 (RPS19BP1) (Bos taurus (Bovine)).